A 413-amino-acid chain; its full sequence is Cell wall mannoprotein HSP150 (413 aa).

Positions 1–18 (MQYKKTLVASALAATTLA) are cleaved as a signal peptide. Residues 19 to 72 (AYAPSEPWSTLTPTATYSGGVTDYASTFGIAVQPISTTSSASSAATTASSKAKR) constitute a propeptide that is removed on maturation. PIR1/2/3 repeat units lie at residues 73–89 (AASQIGDGQVQAATTTA), 97–115 (AAAVSQIGDGQIQATTKTT), 116–134 (AAAVSQIGDGQIQATTKTT), 140–158 (AAAVSQISDGQIQATTTTL), 164–182 (AAAVSQIGDGQVQATTTTL), 188–206 (AAAVSQIGDGQVQATTKTT), 207–225 (AAAVSQIGDGQVQATTKTT), 226–244 (AAAVSQIGDGQVQATTKTT), 245–263 (AAAVSQIGDGQVQATTKTT), 264–282 (AAAVSQITDGQVQATTKTT), and 283–300 (QAASQVSDGQVQATTATS).

This sequence belongs to the PIR protein family. In terms of processing, covalently linked to beta-1,3-glucan of the inner cell wall layer via an alkali-sensitive ester linkage between the gamma-carboxyl group of glutamic acids, arising from specific glutamines within the PIR1/2/3 repeats, and hydroxyl groups of glucoses of beta-1,3-glucan chains. Post-translationally, the propeptide is cleaved off in the late Golgi. While both peptides are secreted, only a fraction of the mature glycoprotein is incorporated into the cell wall. O-glycosylated. Extensively O-mannosylated.

The protein resides in the secreted. Its subcellular location is the cell wall. Its function is as follows. Component of the outer cell wall layer. Required for stability of the cell wall and for optimal growth. Required for resistance against several antifungal and cell wall-perturbing agents and for tolerance to heat shock. This chain is Cell wall mannoprotein HSP150 (HSP150), found in Saccharomyces cerevisiae (strain ATCC 204508 / S288c) (Baker's yeast).